Consider the following 466-residue polypeptide: Cysteine--tRNA ligase (466 aa).

Zn(2+) is bound at residue cysteine 28. Positions 30-40 match the 'HIGH' region motif; sequence PTVYNYIHIGN. Zn(2+)-binding residues include cysteine 208, histidine 233, and glutamate 237. The short motif at 265-269 is the 'KMSKS' region element; the sequence is KMSKS. Lysine 268 contacts ATP.

This sequence belongs to the class-I aminoacyl-tRNA synthetase family. As to quaternary structure, monomer. Zn(2+) is required as a cofactor.

The protein resides in the cytoplasm. It catalyses the reaction tRNA(Cys) + L-cysteine + ATP = L-cysteinyl-tRNA(Cys) + AMP + diphosphate. This chain is Cysteine--tRNA ligase, found in Staphylococcus haemolyticus (strain JCSC1435).